We begin with the raw amino-acid sequence, 179 residues long: Pyridoxal 5'-phosphate synthase subunit PdxT (179 aa).

Residue 48–50 (GES) coordinates L-glutamine. The Nucleophile role is filled by cysteine 79. L-glutamine-binding positions include arginine 101 and 127-128 (IR). Residues histidine 163 and glutamate 165 each act as charge relay system in the active site.

The protein belongs to the glutaminase PdxT/SNO family. As to quaternary structure, in the presence of PdxS, forms a dodecamer of heterodimers. Only shows activity in the heterodimer.

The catalysed reaction is aldehydo-D-ribose 5-phosphate + D-glyceraldehyde 3-phosphate + L-glutamine = pyridoxal 5'-phosphate + L-glutamate + phosphate + 3 H2O + H(+). The enzyme catalyses L-glutamine + H2O = L-glutamate + NH4(+). The protein operates within cofactor biosynthesis; pyridoxal 5'-phosphate biosynthesis. Its function is as follows. Catalyzes the hydrolysis of glutamine to glutamate and ammonia as part of the biosynthesis of pyridoxal 5'-phosphate. The resulting ammonia molecule is channeled to the active site of PdxS. This chain is Pyridoxal 5'-phosphate synthase subunit PdxT, found in Francisella philomiragia subsp. philomiragia (strain ATCC 25017 / CCUG 19701 / FSC 153 / O#319-036).